The chain runs to 103 residues: Large ribosomal subunit protein bL21 (103 aa).

This sequence belongs to the bacterial ribosomal protein bL21 family. As to quaternary structure, part of the 50S ribosomal subunit. Contacts protein L20.

This protein binds to 23S rRNA in the presence of protein L20. This chain is Large ribosomal subunit protein bL21, found in Pseudoalteromonas atlantica (strain T6c / ATCC BAA-1087).